The chain runs to 700 residues: MAGIAAKLAKDREAAEGLGSHERAVKYLNQDYAALRDECLEAGALFQDPSFPALPSSLGFKELGPYSSKTRGIEWKRPTEICDNPQFITGGATRTDICQGALGDCWLLAAIASLTLNEEILARVVPLDQSFQENYAGIFHFQFWQYGEWVEVVVDDRLPTKDGELLFVHSAEGSEFWSALLEKAYAKINGCYEALSGGATTEGFEDFTGGIAEWYELRKAPPNLFRIIQKALQKGSLLGCSIDITSAADSEAITFQKLVKGHAYSVTGAEEVESRGSLQKLIRIRNPWGEVEWTGQWNDNCPNWNTVDPEVRETLTRQHEDGEFWMSFNDFLRHYSRLEICNLTPDTLTSDSYKKWKLTKMDGNWRRGSTAGGCRNYPNTFWMNPQYLIKLEEEDEDQEDGESGCTFLVGLIQKHRRRQRKMGEDMHTIGFGIYEVPEELTGQTNIHLSKKFFLTTRARERSDTFINLREVLNRFKLPPGEYIVVPSTFEPNKDGDFCIRVFSEKKADYQVVDDEIEANIDEIDISEDDIDDGFRRLFAQLAGEDAEISAFELQTILRRVLAKRQDIKSDGFSIETCKIMVDMLDSDGSGKLGLKEFYILWTKIQKYQKIYREIDVDRSGTMNSYEMRKALEEAGFKMPCQLHQVIVARFADDDLIIDFDNFVRCLIRLETLFRIFKQLDPENTGMIQLDLISWLSFSVL.

An N-acetylalanine modification is found at Ala2. Positions 2–19 (AGIAAKLAKDREAAEGLG) are cleaved as a propeptide — anchors to the small subunit. The Calpain catalytic domain maps to 45-344 (LFQDPSFPAL…YSRLEICNLT (300 aa)). Ca(2+) is bound by residues Gly91 and Asp96. Residue Cys105 is part of the active site. Residues Glu175, Gln229, and Lys230 each contribute to the Ca(2+) site. Residues His262 and Asn286 contribute to the active site. Ca(2+) is bound by residues Glu292, Asp299, and Glu323. The tract at residues 345–514 (PDTLTSDSYK…KKADYQVVDD (170 aa)) is domain III. The segment at 515 to 529 (EIEANIDEIDISEDD) is linker. The domain IV stretch occupies residues 530 to 700 (IDDGFRRLFA…LISWLSFSVL (171 aa)). Ca(2+) is bound by residues Ala542, Asp545, Glu547, Glu552, Asp585, Asp587, Ser589, Lys591, Glu596, Asp615, Asp617, Ser619, Thr621, Glu626, Asp658, and Asn661. 3 EF-hand domains span residues 572 to 597 (FSIETCKIMVDMLDSDGSGKLGLKEF), 602 to 637 (TKIQKYQKIYREIDVDRSGTMNSYEMRKALEEAGFK), and 652 to 672 (DDDLIIDFDNFVRCLIRLETL).

Belongs to the peptidase C2 family. As to quaternary structure, forms a heterodimer with a small (regulatory) subunit (CAPNS1). Interacts with CPEB3; this leads to cleavage of CPEB3. Ca(2+) serves as cofactor. Ubiquitous.

The protein resides in the cytoplasm. Its subcellular location is the cell membrane. It carries out the reaction Broad endopeptidase specificity.. With respect to regulation, activated by 200-1000 micromolar concentrations of calcium and inhibited by calpastatin. In terms of biological role, calcium-regulated non-lysosomal thiol-protease which catalyzes limited proteolysis of substrates involved in cytoskeletal remodeling and signal transduction. Proteolytically cleaves MYOC at 'Arg-226'. Proteolytically cleaves CPEB3 following neuronal stimulation which abolishes CPEB3 translational repressor activity, leading to translation of CPEB3 target mRNAs. The protein is Calpain-2 catalytic subunit (CAPN2) of Bos taurus (Bovine).